The primary structure comprises 626 residues: Serine/threonine-protein kinase PknB (626 aa).

Residues 1-332 (MTTPSHLSDR…DRSIGSVGRW (332 aa)) are Cytoplasmic-facing. Residues 11-274 (YELGEILGFG…TAAEMRADLV (264 aa)) form the Protein kinase domain. ATP is bound by residues 17–25 (LGFGGMSEV), lysine 40, and 93–95 (EYV). Aspartate 138 functions as the Proton acceptor in the catalytic mechanism. Residues 140-143 (KPAN) and aspartate 156 each bind ATP. Positions 143 and 156 each coordinate Mg(2+). 2 positions are modified to phosphoserine; by autocatalysis: serine 166 and serine 169. Threonine 171, threonine 173, and threonine 294 each carry phosphothreonine; by autocatalysis. Serine 295 bears the Phosphoserine; by autocatalysis mark. Residues 299–323 (SAAGNLSGPRTDPLPRQDLDDTDRD) form a disordered region. The residue at position 309 (threonine 309) is a Phosphothreonine; by autocatalysis. Positions 311-323 (PLPRQDLDDTDRD) are enriched in basic and acidic residues. The chain crosses the membrane as a helical span at residues 333–353 (VAVVAVLAVLTVVVTIAINTF). Residues 354–626 (GGITRDVQVP…DGIITLRFGQ (273 aa)) lie on the Extracellular side of the membrane. PASTA domains follow at residues 356–422 (ITRD…NVST), 423–490 (GPEQ…IVGS), 491–557 (GPAT…QVSK), and 558–626 (GNQF…RFGQ).

The protein belongs to the protein kinase superfamily. Ser/Thr protein kinase family. In terms of assembly, homodimer. Autophosphorylated. Dephosphorylated by PstP.

Its subcellular location is the cell membrane. It catalyses the reaction L-seryl-[protein] + ATP = O-phospho-L-seryl-[protein] + ADP + H(+). It carries out the reaction L-threonyl-[protein] + ATP = O-phospho-L-threonyl-[protein] + ADP + H(+). Functionally, protein kinase that regulates many aspects of mycobacterial physiology. Is a key component of a signal transduction pathway that regulates cell growth, cell shape and cell division via phosphorylation of target proteins. The chain is Serine/threonine-protein kinase PknB (pknB) from Mycobacterium bovis (strain ATCC BAA-935 / AF2122/97).